The chain runs to 146 residues: Large ribosomal subunit protein uL15 (146 aa).

Positions 1-55 (MGLRLNELSPGVGAKKTAQRRGRGIGSGLGKTGGRGVKGQKSRSGSSIRSGFEGG) are disordered. A compositionally biased stretch (gly residues) spans 24 to 37 (GIGSGLGKTGGRGV).

Belongs to the universal ribosomal protein uL15 family. Part of the 50S ribosomal subunit.

In terms of biological role, binds to the 23S rRNA. The polypeptide is Large ribosomal subunit protein uL15 (Psychrobacter cryohalolentis (strain ATCC BAA-1226 / DSM 17306 / VKM B-2378 / K5)).